The primary structure comprises 742 residues: Potassium transporter 19 (742 aa).

The Cytoplasmic portion of the chain corresponds to 1–46 (MSVQEDGAARPEPDVLRRHDSLYGDAEKVSNNKRHGAGGSWARTLQ). The chain crosses the membrane as a helical span at residues 47-67 (LAFQSIGVVYGDVGTSPLYVY). Topologically, residues 68–83 (SSTFPNGIKHPDDLVG) are extracellular. A helical transmembrane segment spans residues 84–104 (VLSLILYTLILIPMVKYVFIV). At 105–170 (LYANDNGDGG…QKLESSNAAK (66 aa)) the chain is on the cytoplasmic side. Residues 171–191 (IALFTITILGTSMVMGDGTLT) traverse the membrane as a helical segment. Residues 192 to 206 (PAISVLSAVSGIREK) are Extracellular-facing. The chain crosses the membrane as a helical span at residues 207–227 (APNLTQSQVVWISVAILFVLF). Residues 228-236 (SMQRFGTDK) are Cytoplasmic-facing. Residues 237-257 (VGYTFAPVISVWFLLIAGIGM) traverse the membrane as a helical segment. The Extracellular portion of the chain corresponds to 258–287 (YNLTVHEITILRAFNPKYIVDYFRRNGKEA). Asn259 carries an N-linked (GlcNAc...) asparagine glycan. Residues 288–308 (WVSLGGVVLCITGTEAMFADL) traverse the membrane as a helical segment. The Cytoplasmic segment spans residues 309 to 317 (GHFNIRAIQ). Residues 318-338 (LSFTCVLFPSVALCYMGQAAY) traverse the membrane as a helical segment. Residues 339 to 352 (LRKFPENVGDTFYR) lie on the Extracellular side of the membrane. Residues 353-373 (SIPAPLFWPVFVVAIMGAIIA) form a helical membrane-spanning segment. Residues 374–409 (SQAMLSGAFAILSKALSLGCFPRVEVVHTSNKYEGQ) are Cytoplasmic-facing. A helical transmembrane segment spans residues 410-430 (VYIPEVNFLIGAASVAVTLAF). Over 431-441 (QTTANIGNAYG) the chain is Extracellular. Residues 442–462 (ICVVTVFSITTHLMTVVMLLI) traverse the membrane as a helical segment. Over 463-468 (WKVRLP) the chain is Cytoplasmic. A helical membrane pass occupies residues 469–489 (FIAAFYAAFGLAEFLYLSSIL). Residues 490–495 (SKFAEG) lie on the Extracellular side of the membrane. The helical transmembrane segment at 496–516 (GYLPFCFSLVLMALMATWHYV) threads the bilayer. Topologically, residues 517-742 (HVKRYWYELD…LLKVGITYEI (226 aa)) are cytoplasmic.

Belongs to the HAK/KUP transporter (TC 2.A.72.3) family.

It is found in the membrane. High-affinity potassium transporter. The sequence is that of Potassium transporter 19 (HAK19) from Oryza sativa subsp. japonica (Rice).